The sequence spans 113 residues: Colicin-E1* immunity protein (113 aa).

This protein is able to protect a cell, which harbors the plasmid pKY-1 encoding colicin E1*, against colicin E1*. The protein is Colicin-E1* immunity protein (imm) of Shigella sonnei.